The following is a 192-amino-acid chain: Probable metallophosphoesterase MJ0623 (192 aa).

Residues D41, H43, D70, N92, H115, H144, and H146 each contribute to the a divalent metal cation site.

This sequence belongs to the metallophosphoesterase superfamily. YfcE family. A divalent metal cation is required as a cofactor.

The sequence is that of Probable metallophosphoesterase MJ0623 from Methanocaldococcus jannaschii (strain ATCC 43067 / DSM 2661 / JAL-1 / JCM 10045 / NBRC 100440) (Methanococcus jannaschii).